Here is a 147-residue protein sequence, read N- to C-terminus: Hemoglobin subunit beta (147 aa).

Residues 3-147 form the Globin domain; it reads EWTDSERAII…VVSALGREYH (145 aa). Heme b is bound by residues His64 and His93.

Belongs to the globin family. In terms of assembly, heterotetramer of two alpha chains and two beta chains. Red blood cells.

Involved in oxygen transport from gills to the various peripheral tissues. The chain is Hemoglobin subunit beta (hbb) from Gadus morhua (Atlantic cod).